Consider the following 66-residue polypeptide: MFTLKKSLLLLFFLGTINLSLCEEERNAEEERRDNPDERDVEVEKRFLGGLIKIVPAMICAVTKKC.

The signal sequence occupies residues 1–20; sequence MFTLKKSLLLLFFLGTINLS. Positions 21-44 are cleaved as a propeptide — small acidic peptide; sequence LCEEERNAEEERRDNPDERDVEVE. An intrachain disulfide couples C60 to C66.

Belongs to the frog skin active peptide (FSAP) family. Brevinin subfamily. In terms of tissue distribution, expressed by the skin dorsal glands.

The protein localises to the secreted. Its function is as follows. Potent microbicidal activity, active against S.aureus and E.coli. It also acts as a membrane-disruptive agent at higher concentrations. This Aquarana catesbeiana (American bullfrog) protein is Ranalexin.